A 160-amino-acid chain; its full sequence is NADH-quinone oxidoreductase subunit B (160 aa).

4 residues coordinate [4Fe-4S] cluster: Cys-37, Cys-38, Cys-102, and Cys-132.

This sequence belongs to the complex I 20 kDa subunit family. As to quaternary structure, NDH-1 is composed of 14 different subunits. Subunits NuoB, C, D, E, F, and G constitute the peripheral sector of the complex. [4Fe-4S] cluster serves as cofactor.

It is found in the cell inner membrane. The catalysed reaction is a quinone + NADH + 5 H(+)(in) = a quinol + NAD(+) + 4 H(+)(out). NDH-1 shuttles electrons from NADH, via FMN and iron-sulfur (Fe-S) centers, to quinones in the respiratory chain. Couples the redox reaction to proton translocation (for every two electrons transferred, four hydrogen ions are translocated across the cytoplasmic membrane), and thus conserves the redox energy in a proton gradient. The sequence is that of NADH-quinone oxidoreductase subunit B from Neisseria meningitidis serogroup A / serotype 4A (strain DSM 15465 / Z2491).